Here is a 230-residue protein sequence, read N- to C-terminus: uncharacterized protein (230 aa).

It to E.coli HemX N-terminal region.

This is an uncharacterized protein from Haemophilus influenzae (strain ATCC 51907 / DSM 11121 / KW20 / Rd).